A 563-amino-acid chain; its full sequence is Rab escort protein 1 (563 aa).

The disordered stretch occupies residues 538–563; it reads ELFKEETSPAENTTEEENDGGVEIED. Over residues 550–563 the composition is skewed to acidic residues; that stretch reads TTEEENDGGVEIED.

Belongs to the Rab GDI family. In terms of assembly, heterotrimer composed of the alpha subunit RGTA, the beta subunit RGTB and REP; within this trimer, RGTA and RGTB form the catalytic component, while REP mediates peptide substrate binding. Expressed in roots, leaves and flowers.

It is found in the cytoplasm. In terms of biological role, substrate-binding subunit of the Rab geranylgeranyltransferase (GGTase) complex. Binds unprenylated Rab proteins and presents the substrate peptide to the catalytic component composed of the alpha subunit RGTA and the beta subunit RGTB. Preferentially binds the GDP-bound form of Rab and stimulates geranylgeranylation of various Rab GTPases in vitro. The chain is Rab escort protein 1 from Arabidopsis thaliana (Mouse-ear cress).